The following is a 180-amino-acid chain: Large ribosomal subunit protein uL5 (180 aa).

The protein belongs to the universal ribosomal protein uL5 family. Part of the 50S ribosomal subunit; part of the 5S rRNA/L5/L18/L25 subcomplex. Contacts the 5S rRNA and the P site tRNA. Forms a bridge to the 30S subunit in the 70S ribosome.

Its function is as follows. This is one of the proteins that bind and probably mediate the attachment of the 5S RNA into the large ribosomal subunit, where it forms part of the central protuberance. In the 70S ribosome it contacts protein S13 of the 30S subunit (bridge B1b), connecting the 2 subunits; this bridge is implicated in subunit movement. Contacts the P site tRNA; the 5S rRNA and some of its associated proteins might help stabilize positioning of ribosome-bound tRNAs. In Polynucleobacter asymbioticus (strain DSM 18221 / CIP 109841 / QLW-P1DMWA-1) (Polynucleobacter necessarius subsp. asymbioticus), this protein is Large ribosomal subunit protein uL5.